The sequence spans 432 residues: Glutamate-1-semialdehyde 2,1-aminomutase (432 aa).

Lys-272 is modified (N6-(pyridoxal phosphate)lysine).

This sequence belongs to the class-III pyridoxal-phosphate-dependent aminotransferase family. HemL subfamily. As to quaternary structure, homodimer. The cofactor is pyridoxal 5'-phosphate.

The protein localises to the cytoplasm. It carries out the reaction (S)-4-amino-5-oxopentanoate = 5-aminolevulinate. It participates in porphyrin-containing compound metabolism; protoporphyrin-IX biosynthesis; 5-aminolevulinate from L-glutamyl-tRNA(Glu): step 2/2. The protein operates within porphyrin-containing compound metabolism; chlorophyll biosynthesis. The chain is Glutamate-1-semialdehyde 2,1-aminomutase from Nostoc punctiforme (strain ATCC 29133 / PCC 73102).